The sequence spans 823 residues: Zygotic DNA replication licensing factor mcm6-A (823 aa).

The C4-type zinc-finger motif lies at Cys-159–Cys-186. One can recognise an MCM domain in the interval Leu-347 to Val-554. An ATP-binding site is contributed by Gly-397–Ser-404. Positions Ser-529 to Asp-532 match the Arginine finger motif. Residues Pro-663–Ala-710 are disordered. The segment covering Leu-667 to Gln-680 has biased composition (acidic residues). The segment covering Asn-691–His-703 has biased composition (low complexity).

The protein belongs to the MCM family. Component of the mcm2-7 complex (RLF-M). The complex forms a toroidal hexameric ring with the proposed subunit order mcm2-mcm6-mcm4-mcm7-mcm3-mcm5 (By simililarity). Begins to associate with zmcm3, mcm4 and mcm7 into mcm complexes at the neurula stage. May replace mmcm6 in the complex that functions during licensing of DNA replication.

It is found in the nucleus. It carries out the reaction ATP + H2O = ADP + phosphate + H(+). In terms of biological role, acts as a component of the mcm2-7 complex (mcm complex) which is the putative replicative helicase essential for 'once per cell cycle' DNA replication initiation and elongation in eukaryotic cells. The active ATPase sites in the mcm2-7 ring are formed through the interaction surfaces of two neighboring subunits such that a critical structure of a conserved arginine finger motif is provided in trans relative to the ATP-binding site of the Walker A box of the adjacent subunit. The six ATPase active sites, however, are likely to contribute differentially to the complex helicase activity. The existence of maternal and zygotic forms of mcm3 and mcm6 suggests that specific forms of mcm2-7 complexes may be used during different stages of development. May replace mmcm6 in the mcm2-7 complex. The polypeptide is Zygotic DNA replication licensing factor mcm6-A (zmcm6-a) (Xenopus laevis (African clawed frog)).